The chain runs to 106 residues: uncharacterized protein (106 aa).

Disordered stretches follow at residues 27–47 (FSDS…DVSD) and 83–106 (SPAM…VQSK). Residues 29-39 (DSEDEPDDEAS) are compositionally biased toward acidic residues. A compositionally biased stretch (basic and acidic residues) spans 94-106 (GIEREDRGGVQSK).

The protein resides in the mitochondrion. This is an uncharacterized protein from Arabidopsis thaliana (Mouse-ear cress).